The following is a 238-amino-acid chain: Octanoyltransferase (238 aa).

One can recognise a BPL/LPL catalytic domain in the interval 44–224; that stretch reads AGGPDSLLLL…AVLDALDGRI (181 aa). Residues 82–89, 154–156, and 167–169 contribute to the substrate site; these read RGGKITWH, AIG, and GFA. Cysteine 185 acts as the Acyl-thioester intermediate in catalysis.

The protein belongs to the LipB family.

The protein localises to the cytoplasm. The enzyme catalyses octanoyl-[ACP] + L-lysyl-[protein] = N(6)-octanoyl-L-lysyl-[protein] + holo-[ACP] + H(+). Its pathway is protein modification; protein lipoylation via endogenous pathway; protein N(6)-(lipoyl)lysine from octanoyl-[acyl-carrier-protein]: step 1/2. Its function is as follows. Catalyzes the transfer of endogenously produced octanoic acid from octanoyl-acyl-carrier-protein onto the lipoyl domains of lipoate-dependent enzymes. Lipoyl-ACP can also act as a substrate although octanoyl-ACP is likely to be the physiological substrate. The chain is Octanoyltransferase from Mycolicibacterium gilvum (strain PYR-GCK) (Mycobacterium gilvum (strain PYR-GCK)).